The chain runs to 352 residues: C-C chemokine receptor type 5 (352 aa).

The Extracellular portion of the chain corresponds to 1–30; it reads MDYQVSSPTYDIDYYTSEPCQKINVKQIAA. Tyr-3 is modified (sulfotyrosine). Residues Ser-6 and Ser-7 are each glycosylated (O-linked (GalNAc...) serine). Sulfotyrosine occurs at positions 10, 14, and 15. Intrachain disulfides connect Cys-20–Cys-269 and Cys-101–Cys-178. Residues 31 to 58 traverse the membrane as a helical segment; sequence RLLPPLYSLVFIFGFVGNILVVLILINC. The Cytoplasmic portion of the chain corresponds to 59-68; the sequence is KRLKSMTDIY. A helical membrane pass occupies residues 69–89; sequence LLNLAISDLLFLLTVPFWAHY. Over 90–102 the chain is Extracellular; that stretch reads AAAQWDFGNTMCQ. Residues 103–124 form a helical membrane-spanning segment; that stretch reads LLTGLYFIGFFSGIFFIILLTI. At 125 to 141 the chain is on the cytoplasmic side; it reads DRYLAIVHAVFALKART. A helical membrane pass occupies residues 142-166; the sequence is VTFGVVTSVITWVVAVFASLPRIIF. The Extracellular portion of the chain corresponds to 167–198; that stretch reads TTSHRERLHYTCSSHFPYSQYQFWKNFHTLKI. Residues 199 to 218 form a helical membrane-spanning segment; the sequence is VILGLVLPLLVMVICYSGIL. At 219 to 235 the chain is on the cytoplasmic side; it reads KTLLRCRNEKKRHRAVR. The helical transmembrane segment at 236–260 threads the bilayer; sequence LIFTIMIVYFLFWAPYNIVLLLNTF. The Extracellular segment spans residues 261-277; that stretch reads QEFFGLNNCSSSNRLDQ. Residues 278–301 traverse the membrane as a helical segment; the sequence is AMQVTETLGMTHCCINPIIYAFVG. At 302-352 the chain is on the cytoplasmic side; that stretch reads EKFRNYLLVFFQKHIAKRFCKCCSIFQQEAPERASSVYTRSTGEQEISVGL. Residues Cys-321, Cys-323, and Cys-324 are each lipidated (S-palmitoyl cysteine). Residues Ser-336, Ser-337, Ser-342, and Ser-349 each carry the phosphoserine; by BARK1 modification.

It belongs to the G-protein coupled receptor 1 family. Interacts with PRAF2. Efficient ligand binding to CCL3/MIP-1alpha and CCL4/MIP-1beta requires sulfation, O-glycosylation and sialic acid modifications. Glycosylation on Ser-6 is required for efficient binding of CCL4. Interacts with GRK2. Interacts with ARRB1 and ARRB2. Interacts with CNIH4. Interacts with S100A4; this interaction stimulates T-lymphocyte chemotaxis. In terms of processing, sulfated on at least 2 of the N-terminal tyrosines. Sulfation is required for efficient binding of the chemokines, CCL3 and CCL4. Palmitoylation in the C-terminal is important for cell surface expression. Post-translationally, phosphorylation on serine residues in the C-terminal is stimulated by binding CC chemokines especially by APO-RANTES. In terms of processing, O-glycosylated, but not N-glycosylated. Ser-6 appears to be the major site even if Ser-7 may be also O-glycosylated. Also sialylated glycans present which contribute to chemokine binding. Thr-16 and Ser-17 may also be glycosylated and, if so, with small moieties such as a T-antigen.

The protein resides in the cell membrane. Functionally, receptor for a number of inflammatory CC-chemokines including CCL3/MIP-1-alpha, CCL4/MIP-1-beta and RANTES and subsequently transduces a signal by increasing the intracellular calcium ion level. May play a role in the control of granulocytic lineage proliferation or differentiation. Participates in T-lymphocyte migration to the infection site by acting as a chemotactic receptor. This chain is C-C chemokine receptor type 5 (CCR5), found in Cercopithecus ascanius (Black-cheeked white-nosed monkey).